The chain runs to 329 residues: Sex comb on midleg-like protein 1 (329 aa).

Phosphoserine occurs at positions 138 and 238. Residues 138 to 157 (SPTLPVSRRENNSPSNLPRP) form a disordered region. In terms of domain architecture, SAM spans 258-325 (WSVEAVVLFL…YYIDRLKQGK (68 aa)).

It belongs to the SCM family.

The protein localises to the nucleus. Putative Polycomb group (PcG) protein. PcG proteins act by forming multiprotein complexes, which are required to maintain the transcriptionally repressive state of homeotic genes throughout development. May be involved in spermatogenesis during sexual maturation. The polypeptide is Sex comb on midleg-like protein 1 (SCML1) (Pan troglodytes (Chimpanzee)).